The chain runs to 428 residues: RUN domain-containing protein 3A (428 aa).

The 131-residue stretch at 52 to 182 folds into the RUN domain; that stretch reads DDSSEEFINF…IDFSFCLKGE (131 aa). A coiled-coil region spans residues 237 to 314; sequence ESWRNKCRKM…ELQEQLTSLI (78 aa). Positions 349–375 are disordered; sequence HRGSFPSPEPHISLTTGSQRTERKQNG.

This sequence belongs to the RUNDC3 family.

The chain is RUN domain-containing protein 3A (rundc3a) from Danio rerio (Zebrafish).